The primary structure comprises 394 residues: Elongation factor Tu (394 aa).

Residues 10–204 form the tr-type G domain; the sequence is KPHVNVGTIG…HLDNYIPEPE (195 aa). The tract at residues 19–26 is G1; sequence GHVDHGKT. Residue 19-26 coordinates GTP; it reads GHVDHGKT. Residue T26 coordinates Mg(2+). Residues 60–64 are G2; sequence GITIN. Residues 81 to 84 are G3; sequence DCPG. GTP-binding positions include 81–85 and 136–139; these read DCPGH and NKCD. Residues 136-139 are G4; it reads NKCD. Residues 174–176 form a G5 region; the sequence is SAL.

This sequence belongs to the TRAFAC class translation factor GTPase superfamily. Classic translation factor GTPase family. EF-Tu/EF-1A subfamily. Monomer.

It is found in the cytoplasm. The catalysed reaction is GTP + H2O = GDP + phosphate + H(+). GTP hydrolase that promotes the GTP-dependent binding of aminoacyl-tRNA to the A-site of ribosomes during protein biosynthesis. In Histophilus somni (strain 129Pt) (Haemophilus somnus), this protein is Elongation factor Tu.